We begin with the raw amino-acid sequence, 506 residues long: Protein P7 (506 aa).

RNA-binding stretches follow at residues 128 to 249 (ISYL…GKRE) and 325 to 355 (DGSY…FKIS).

This sequence belongs to the phytoreovirus protein P7 family.

It localises to the virion. Its subcellular location is the host cytoplasm. Probable component of the transcriptional machinery present in the inner capsid. Displays dsRNA binding activity and may play an important role in the sorting of viral RNA and virion assembly. Together with the RNA-directed RNA polymerase P1 and capping enzyme P5, forms an transcriptional complex positioned near the channels situated at each of the five-fold vertices of the core. This is Protein P7 from Alopecurus aequalis (Barnyard grass).